A 337-amino-acid chain; its full sequence is Holliday junction branch migration complex subunit RuvB (337 aa).

The tract at residues 4 to 186 (ADRLIHPQII…FGIPLRLEFY (183 aa)) is large ATPase domain (RuvB-L). ATP-binding positions include arginine 26, glycine 67, lysine 70, threonine 71, threonine 72, 133–135 (EDY), arginine 176, tyrosine 186, and arginine 223. Threonine 71 is a binding site for Mg(2+). The interval 187–257 (NVKDLSSIVA…IAEAALDMLD (71 aa)) is small ATPAse domain (RuvB-S). The tract at residues 260-337 (AEGFDYMDRK…NHFNIIKPDA (78 aa)) is head domain (RuvB-H). DNA contacts are provided by arginine 296, arginine 315, and arginine 320.

Belongs to the RuvB family. Homohexamer. Forms an RuvA(8)-RuvB(12)-Holliday junction (HJ) complex. HJ DNA is sandwiched between 2 RuvA tetramers; dsDNA enters through RuvA and exits via RuvB. An RuvB hexamer assembles on each DNA strand where it exits the tetramer. Each RuvB hexamer is contacted by two RuvA subunits (via domain III) on 2 adjacent RuvB subunits; this complex drives branch migration. In the full resolvosome a probable DNA-RuvA(4)-RuvB(12)-RuvC(2) complex forms which resolves the HJ.

The protein resides in the cytoplasm. The enzyme catalyses ATP + H2O = ADP + phosphate + H(+). In terms of biological role, the RuvA-RuvB-RuvC complex processes Holliday junction (HJ) DNA during genetic recombination and DNA repair, while the RuvA-RuvB complex plays an important role in the rescue of blocked DNA replication forks via replication fork reversal (RFR). RuvA specifically binds to HJ cruciform DNA, conferring on it an open structure. The RuvB hexamer acts as an ATP-dependent pump, pulling dsDNA into and through the RuvAB complex. RuvB forms 2 homohexamers on either side of HJ DNA bound by 1 or 2 RuvA tetramers; 4 subunits per hexamer contact DNA at a time. Coordinated motions by a converter formed by DNA-disengaged RuvB subunits stimulates ATP hydrolysis and nucleotide exchange. Immobilization of the converter enables RuvB to convert the ATP-contained energy into a lever motion, pulling 2 nucleotides of DNA out of the RuvA tetramer per ATP hydrolyzed, thus driving DNA branch migration. The RuvB motors rotate together with the DNA substrate, which together with the progressing nucleotide cycle form the mechanistic basis for DNA recombination by continuous HJ branch migration. Branch migration allows RuvC to scan DNA until it finds its consensus sequence, where it cleaves and resolves cruciform DNA. This Shewanella halifaxensis (strain HAW-EB4) protein is Holliday junction branch migration complex subunit RuvB.